A 334-amino-acid chain; its full sequence is Malate dehydrogenase, cytoplasmic (334 aa).

Residue Ser-2 is modified to N-acetylserine. NAD(+)-binding positions include 11-17 (GAAGQIA) and Asp-42. Substrate is bound by residues Arg-92 and Arg-98. NAD(+) is bound at residue Asn-105. At Lys-110 the chain carries N6-succinyllysine. Gln-112 contacts NAD(+). Residues Lys-118 and Lys-121 each carry the N6-acetyllysine modification. NAD(+) is bound at residue 129 to 131 (VGN). Substrate is bound by residues Asn-131 and Arg-162. His-187 acts as the Proton acceptor in catalysis. Position 214 is an N6-succinyllysine (Lys-214). The residue at position 217 (Ser-217) is a Phosphoserine. Arg-230 is subject to Omega-N-methylarginine. A Phosphoserine modification is found at Ser-241. Residue Lys-298 is modified to N6-acetyllysine; alternate. Lys-298 carries the post-translational modification N6-succinyllysine; alternate. Residue Ser-309 is modified to Phosphoserine. Lys-318 carries the N6-succinyllysine modification. Residue Ser-333 is modified to Phosphoserine.

The protein belongs to the LDH/MDH superfamily. MDH type 2 family. Homodimer. Post-translationally, ISGylated. In terms of processing, acetylation at Lys-118 dramatically enhances enzymatic activity and promotes adipogenic differentiation.

It is found in the cytoplasm. The protein resides in the cytosol. The catalysed reaction is (S)-malate + NAD(+) = oxaloacetate + NADH + H(+). It carries out the reaction (2R)-2-hydroxy-3-(4-hydroxyphenyl)propanoate + NAD(+) = 3-(4-hydroxyphenyl)pyruvate + NADH + H(+). The enzyme catalyses (S)-2-hydroxyglutarate + NAD(+) = 2-oxoglutarate + NADH + H(+). Functionally, catalyzes the reduction of aromatic alpha-keto acids in the presence of NADH. Plays essential roles in the malate-aspartate shuttle and the tricarboxylic acid cycle, important in mitochondrial NADH supply for oxidative phosphorylation. Catalyzes the reduction of 2-oxoglutarate to 2-hydroxyglutarate, leading to elevated reactive oxygen species (ROS). In Bos taurus (Bovine), this protein is Malate dehydrogenase, cytoplasmic (MDH1).